A 57-amino-acid polypeptide reads, in one-letter code: UPF0391 membrane protein RPC_2356 (57 aa).

2 helical membrane-spanning segments follow: residues 6 to 26 (WALIFFVVSVIVGVLGFTGIS) and 35 to 55 (ILFYIFLVIFLVLLILGLTIF).

The protein belongs to the UPF0391 family.

It is found in the cell membrane. This chain is UPF0391 membrane protein RPC_2356, found in Rhodopseudomonas palustris (strain BisB18).